Reading from the N-terminus, the 248-residue chain is Type III pantothenate kinase (248 aa).

6 to 13 contacts ATP; that stretch reads DCGNSFIK. Substrate is bound by residues tyrosine 92 and 99–102; that span reads GLDR. Aspartate 101 acts as the Proton acceptor in catalysis. Residue aspartate 121 participates in K(+) binding. Threonine 124 provides a ligand contact to ATP. Threonine 180 is a substrate binding site.

Belongs to the type III pantothenate kinase family. As to quaternary structure, homodimer. NH4(+) serves as cofactor. Requires K(+) as cofactor.

It is found in the cytoplasm. The enzyme catalyses (R)-pantothenate + ATP = (R)-4'-phosphopantothenate + ADP + H(+). It functions in the pathway cofactor biosynthesis; coenzyme A biosynthesis; CoA from (R)-pantothenate: step 1/5. Catalyzes the phosphorylation of pantothenate (Pan), the first step in CoA biosynthesis. This chain is Type III pantothenate kinase, found in Ectopseudomonas mendocina (strain ymp) (Pseudomonas mendocina).